A 66-amino-acid chain; its full sequence is MAKGKDVRVTVILECTSCVRNSVDKVSRGISRYITQKNRHNTPNRLELKKFCPYCYKHTIHGEIKK.

The protein belongs to the bacterial ribosomal protein bL33 family.

Its subcellular location is the plastid. It localises to the chloroplast. The polypeptide is Large ribosomal subunit protein bL33c (Nicotiana sylvestris (Wood tobacco)).